Consider the following 308-residue polypeptide: Methionyl-tRNA formyltransferase (308 aa).

109 to 112 provides a ligand contact to (6S)-5,6,7,8-tetrahydrofolate; that stretch reads SLLP.

This sequence belongs to the Fmt family.

The catalysed reaction is L-methionyl-tRNA(fMet) + (6R)-10-formyltetrahydrofolate = N-formyl-L-methionyl-tRNA(fMet) + (6S)-5,6,7,8-tetrahydrofolate + H(+). In terms of biological role, attaches a formyl group to the free amino group of methionyl-tRNA(fMet). The formyl group appears to play a dual role in the initiator identity of N-formylmethionyl-tRNA by promoting its recognition by IF2 and preventing the misappropriation of this tRNA by the elongation apparatus. This chain is Methionyl-tRNA formyltransferase, found in Clostridium beijerinckii (strain ATCC 51743 / NCIMB 8052) (Clostridium acetobutylicum).